The following is a 452-amino-acid chain: Mitochondrial import inner membrane translocase subunit TIM44 (452 aa).

At Thr128 the chain carries Phosphothreonine. ATP is bound at residue 166 to 173; it reads GGEKLGRT. Ser180 bears the Phosphoserine mark. An N6-succinyllysine modification is found at Lys217.

Belongs to the Tim44 family. As to quaternary structure, probable component of the PAM complex at least composed of a mitochondrial HSP70 protein, GRPEL1 or GRPEL2, TIMM44, TIMM16/PAM16 and TIMM14/DNAJC19. The complex interacts with the TIMM23 component of the TIM23 complex. Interacts with SLC25A4/ANT1 and SLC25A5/ANT2; leading to inhibit the presequence translocase TIMM23, thereby promoting stabilization of PINK1.

It is found in the mitochondrion inner membrane. The protein localises to the mitochondrion matrix. Its function is as follows. Essential component of the PAM complex, a complex required for the translocation of transit peptide-containing proteins from the inner membrane into the mitochondrial matrix in an ATP-dependent manner. Recruits mitochondrial HSP70 to drive protein translocation into the matrix using ATP as an energy source. This Homo sapiens (Human) protein is Mitochondrial import inner membrane translocase subunit TIM44 (TIMM44).